The sequence spans 588 residues: Myc box-dependent-interacting protein 1 (588 aa).

Residue Ala2 is modified to N-acetylalanine. The segment at 2–122 is interaction with BIN2; it reads AEMGSKGVTA…DYHQKLVDQA (121 aa). Coiled coils occupy residues 15–42 and 193–274; these read ASNV…TKDE and HLVA…EKQH. The BAR domain occupies 29–276; it reads VLQKLGKADE…LVSLEKQHGS (248 aa). Positions 279-355 are disordered; the sequence is FTVKAQPSDN…PKHTPSKEMK (77 aa). Ser296, Ser298, and Ser304 each carry phosphoserine. The residue at position 308 (Thr308) is a Phosphothreonine. 2 positions are modified to phosphoserine: Ser324 and Ser332. The segment at 379 to 422 is clathrin-binding; it reads FEAPGPFSEQASLLDLDFEPLPPVASPVKAPTPSGQSIPWDLWE. The disordered stretch occupies residues 448 to 484; sequence PSQTAEPGPAQPAEASEVVGGAQEPGETAASEATSSS. Low complexity predominate over residues 474-484; the sequence is ETAASEATSSS. One can recognise an SH3 domain in the interval 515–588; sequence GFMFKVQAQH…FPENFTERVQ (74 aa).

As to quaternary structure, heterodimer with AMPH. Binds SH3GLB1. Interacts (via SH3 domain) with DNM1. Interacts with SYNJ1. Interacts (via SH3 domain) with DNM2. Interacts with CLTC. Interacts with AP2A2. Interacts with AP2B1. Interacts with MYC (via N-terminal transactivation domain); the interaction requires the integrity of the conserved MYC box regions 1 and 2. Interacts with BIN2. Interacts with SNX4. Interacts (via BAR domain) with BACE1. Binds (via BAR domain) F-actin. Phosphorylated by protein kinase C. Isoform 1 is expressed mainly in the brain. Isoform 2 is widely expressed.

The protein resides in the nucleus. It is found in the cytoplasm. The protein localises to the endosome. It localises to the cell membrane. Its subcellular location is the sarcolemma. The protein resides in the T-tubule. In terms of biological role, is a key player in the control of plasma membrane curvature, and membrane shaping and remodeling. Required in muscle cells for the formation of T-tubules, tubular invaginations of the plasma membrane that function in depolarization-contraction coupling. Required in muscle cells for the formation of T-tubules, tubular invaginations of the plasma membrane that function in depolarization-contraction coupling. Is a negative regulator of endocytosis. Is also involved in the regulation of intracellular vesicles sorting, modulation of BACE1 trafficking and the control of amyloid-beta production. In neuronal circuits, endocytosis regulation may influence the internalization of PHF-tau aggregates. May be involved in the regulation of MYC activity and the control cell proliferation. The chain is Myc box-dependent-interacting protein 1 (Bin1) from Mus musculus (Mouse).